A 72-amino-acid chain; its full sequence is Translation initiation factor IF-1 (72 aa).

One can recognise an S1-like domain in the interval 1-72 (MAKDDVIEVE…NRGRITYRFK (72 aa)). Residue tyrosine 60 is modified to Phosphotyrosine.

This sequence belongs to the IF-1 family. Component of the 30S ribosomal translation pre-initiation complex which assembles on the 30S ribosome in the order IF-2 and IF-3, IF-1 and N-formylmethionyl-tRNA(fMet); mRNA recruitment can occur at any time during PIC assembly.

It is found in the cytoplasm. Functionally, one of the essential components for the initiation of protein synthesis. Stabilizes the binding of IF-2 and IF-3 on the 30S subunit to which N-formylmethionyl-tRNA(fMet) subsequently binds. Helps modulate mRNA selection, yielding the 30S pre-initiation complex (PIC). Upon addition of the 50S ribosomal subunit IF-1, IF-2 and IF-3 are released leaving the mature 70S translation initiation complex. The chain is Translation initiation factor IF-1 from Bacillus thuringiensis (strain Al Hakam).